The following is a 123-amino-acid chain: Alpha-lactalbumin A (123 aa).

Positions 1 to 123 (KQFTKCELSQ…KLEQWLCEEL (123 aa)) constitute a C-type lysozyme domain. 4 disulfides stabilise this stretch: Cys6/Cys120, Cys28/Cys111, Cys61/Cys77, and Cys73/Cys91. The Ca(2+) site is built by Lys79, Asp82, Asp84, Asp87, and Asp88.

The protein belongs to the glycosyl hydrolase 22 family. As to quaternary structure, lactose synthase (LS) is a heterodimer of a catalytic component, beta1,4-galactosyltransferase (beta4Gal-T1) and a regulatory component, alpha-lactalbumin (LA). As to expression, mammary gland specific. Secreted in milk.

It localises to the secreted. Functionally, regulatory subunit of lactose synthase, changes the substrate specificity of galactosyltransferase in the mammary gland making glucose a good acceptor substrate for this enzyme. This enables LS to synthesize lactose, the major carbohydrate component of milk. In other tissues, galactosyltransferase transfers galactose onto the N-acetylglucosamine of the oligosaccharide chains in glycoproteins. The polypeptide is Alpha-lactalbumin A (Equus caballus (Horse)).